A 346-amino-acid polypeptide reads, in one-letter code: Putative D-xylulose reductase (346 aa).

Zn(2+)-binding residues include cysteine 39, histidine 64, and glutamate 150.

The protein belongs to the zinc-containing alcohol dehydrogenase family. Zn(2+) serves as cofactor.

The enzyme catalyses xylitol + NAD(+) = D-xylulose + NADH + H(+). The sequence is that of Putative D-xylulose reductase from Rhizobium meliloti (strain 1021) (Ensifer meliloti).